The sequence spans 57 residues: Large ribosomal subunit protein bL32c (57 aa).

It belongs to the bacterial ribosomal protein bL32 family.

Its subcellular location is the plastid. It is found in the chloroplast. This Acorus calamus (Sweet flag) protein is Large ribosomal subunit protein bL32c.